Consider the following 531-residue polypeptide: Achacin (531 aa).

The N-terminal stretch at 1–22 (MLLLNSALFILCLVCWLPGTSS) is a signal peptide. Positions 23–29 (SRVLTRR) are excised as a propeptide. N112, N150, N308, and N392 each carry an N-linked (GlcNAc...) asparagine glycan.

This sequence to A.kurodai aplysianin-A. Homodimer. In terms of tissue distribution, collar tissue.

In terms of biological role, antibacterial glycoprotein. The sequence is that of Achacin from Lissachatina fulica (Giant African land snail).